The primary structure comprises 279 residues: Shikimate dehydrogenase (NADP(+)) (279 aa).

Shikimate is bound by residues Ser18–Ser20 and Thr64. Lys68 acts as the Proton acceptor in catalysis. Glu80 serves as a coordination point for NADP(+). Asn89 and Asp104 together coordinate shikimate. NADP(+)-binding positions include Gly129–Ala133, Asn153–Arg158, and Ile218. A shikimate-binding site is contributed by Tyr220. Gly241 is a binding site for NADP(+).

Belongs to the shikimate dehydrogenase family. In terms of assembly, homodimer.

The enzyme catalyses shikimate + NADP(+) = 3-dehydroshikimate + NADPH + H(+). It functions in the pathway metabolic intermediate biosynthesis; chorismate biosynthesis; chorismate from D-erythrose 4-phosphate and phosphoenolpyruvate: step 4/7. Involved in the biosynthesis of the chorismate, which leads to the biosynthesis of aromatic amino acids. Catalyzes the reversible NADPH linked reduction of 3-dehydroshikimate (DHSA) to yield shikimate (SA). This is Shikimate dehydrogenase (NADP(+)) from Chelativorans sp. (strain BNC1).